Reading from the N-terminus, the 433-residue chain is Putative wall-associated receptor kinase-like 16 (433 aa).

The first 22 residues, methionine 1 to alanine 22, serve as a signal peptide directing secretion. Topologically, residues cysteine 23–tyrosine 29 are extracellular. Residues leucine 30 to isoleucine 50 traverse the membrane as a helical segment. Residues serine 51–arginine 433 lie on the Cytoplasmic side of the membrane. Threonine 97 carries the post-translational modification Phosphothreonine. The Protein kinase domain occupies tyrosine 108–leucine 391. ATP-binding positions include leucine 114–valine 122 and lysine 136. A Phosphotyrosine modification is found at tyrosine 181. Aspartate 233 serves as the catalytic Proton acceptor. Threonine 267 and threonine 272 each carry phosphothreonine. Tyrosine 280 is subject to Phosphotyrosine.

This sequence belongs to the protein kinase superfamily. Ser/Thr protein kinase family.

It localises to the membrane. It catalyses the reaction L-seryl-[protein] + ATP = O-phospho-L-seryl-[protein] + ADP + H(+). It carries out the reaction L-threonyl-[protein] + ATP = O-phospho-L-threonyl-[protein] + ADP + H(+). Putative serine/threonine-protein kinase that may function as a signaling receptor of extracellular matrix component. This Arabidopsis thaliana (Mouse-ear cress) protein is Putative wall-associated receptor kinase-like 16 (WAKL16).